Here is a 639-residue protein sequence, read N- to C-terminus: Eukaryotic translation initiation factor 2-alpha kinase 2 (639 aa).

The region spanning 171–588 (FEEYSLLGRG…LEVLNCGLLL (418 aa)) is the Protein kinase domain. Residues 177 to 185 (LGRGGFGSV) and lysine 200 contribute to the ATP site. Residues 298–320 (ISTSRKSSYSSTTESSNFENLES) are compositionally biased toward low complexity. The tract at residues 298–322 (ISTSRKSSYSSTTESSNFENLESPR) is disordered. Aspartate 417 acts as the Proton acceptor in catalysis.

The protein belongs to the protein kinase superfamily. Ser/Thr protein kinase family. GCN2 subfamily. In terms of processing, autophosphorylated.

The enzyme catalyses L-seryl-[protein] + ATP = O-phospho-L-seryl-[protein] + ADP + H(+). It catalyses the reaction L-threonyl-[protein] + ATP = O-phospho-L-threonyl-[protein] + ADP + H(+). Its function is as follows. Mediates down-regulation of protein synthesis in response to stress conditions by the phosphorylation of the alpha subunit of eIF-2 (tif211) on 'Ser-52'. Protein synthesis is inhibited at the level of initiation. Activity is inhibited in the presence of heme. The chain is Eukaryotic translation initiation factor 2-alpha kinase 2 (hri2) from Schizosaccharomyces pombe (strain 972 / ATCC 24843) (Fission yeast).